Consider the following 290-residue polypeptide: Ventral anterior homeobox 2 (290 aa).

The span at 1 to 17 shows a compositional bias: basic and acidic residues; it reads MGDGGAERDRGPARRAE. The segment at 1–75 is disordered; that stretch reads MGDGGAERDR…GQPGPGEADH (75 aa). Residues 102–161 constitute a DNA-binding region (homeobox); it reads PKRTRTSFTAEQLYRLEMEFQRCQYVVGRERTELARQLNLSETQVKVWFQNRRTKQKKDQ. A disordered region spans residues 205–240; it reads PSLPGLPASHRGTSLGDPRNSSPRLNPLSSASASPP. Over residues 222–238 the composition is skewed to low complexity; it reads PRNSSPRLNPLSSASAS.

This sequence belongs to the EMX homeobox family.

It localises to the nucleus. Its function is as follows. Transcription factor that may function in dorsoventral specification of the forebrain. Regulates the expression of Wnt signaling antagonists including the expression of a truncated TCF7L2 isoform that cannot bind CTNNB1 and acts therefore as a potent dominant-negative Wnt antagonist. Plays a crucial role in eye development and, in particular, in the specification of the ventral optic vesicle. May be a regulator of axial polarization in the retina. This Homo sapiens (Human) protein is Ventral anterior homeobox 2 (VAX2).